A 258-amino-acid polypeptide reads, in one-letter code: UPF0246 protein YaaA (258 aa).

It belongs to the UPF0246 family.

This is UPF0246 protein YaaA from Shigella boydii serotype 18 (strain CDC 3083-94 / BS512).